The primary structure comprises 279 residues: Mirror-image polydactyly gene 1 protein homolog (279 aa).

Over residues 1–11 the composition is skewed to basic and acidic residues; the sequence is MNSEQSIRELG. Residues 1-21 are disordered; sequence MNSEQSIRELGNEVPSEDLEL. 2 coiled-coil regions span residues 65–169 and 218–255; these read LNKE…MLEN and AEEM…STNN. The disordered stretch occupies residues 247–268; sequence KQNQTSTNNTKHPTAKNNQEHT. Polar residues predominate over residues 248–263; it reads QNQTSTNNTKHPTAKN.

The sequence is that of Mirror-image polydactyly gene 1 protein homolog (Mipol1) from Mus musculus (Mouse).